Reading from the N-terminus, the 308-residue chain is Ribosomal RNA large subunit methyltransferase F (308 aa).

Belongs to the methyltransferase superfamily. METTL16/RlmF family.

It localises to the cytoplasm. The enzyme catalyses adenosine(1618) in 23S rRNA + S-adenosyl-L-methionine = N(6)-methyladenosine(1618) in 23S rRNA + S-adenosyl-L-homocysteine + H(+). Functionally, specifically methylates the adenine in position 1618 of 23S rRNA. This chain is Ribosomal RNA large subunit methyltransferase F, found in Escherichia coli O6:H1 (strain CFT073 / ATCC 700928 / UPEC).